A 289-amino-acid chain; its full sequence is uncharacterized protein (289 aa).

Transmembrane regions (helical) follow at residues 7–27, 33–53, 65–85, 92–112, 123–143, 148–168, 182–202, 212–232, 241–261, and 265–285; these read LLLA…KIGL, FNLA…WVFW, WLHL…FQFL, ATNA…WGLV, GVFL…LEFF, IFGD…TVLG, AYAF…SGFA, VAAL…VWYY, SVAV…FYAL, and PDFF…LTTA. EamA domains follow at residues 14–136 and 159–285; these read LIWA…LIVS and FLWA…LTTA.

Belongs to the EamA transporter family.

It localises to the cell membrane. This is an uncharacterized protein from Archaeoglobus fulgidus (strain ATCC 49558 / DSM 4304 / JCM 9628 / NBRC 100126 / VC-16).